Here is a 229-residue protein sequence, read N- to C-terminus: Putative N-acetylmannosamine-6-phosphate 2-epimerase (229 aa).

Belongs to the NanE family.

It carries out the reaction an N-acyl-D-glucosamine 6-phosphate = an N-acyl-D-mannosamine 6-phosphate. Its pathway is amino-sugar metabolism; N-acetylneuraminate degradation; D-fructose 6-phosphate from N-acetylneuraminate: step 3/5. Converts N-acetylmannosamine-6-phosphate (ManNAc-6-P) to N-acetylglucosamine-6-phosphate (GlcNAc-6-P). The chain is Putative N-acetylmannosamine-6-phosphate 2-epimerase from Salmonella arizonae (strain ATCC BAA-731 / CDC346-86 / RSK2980).